The following is a 399-amino-acid chain: Protochlorophyllide reductase, chloroplastic (399 aa).

A chloroplast-targeting transit peptide spans 1–64; sequence MALQTASMLP…RQKVGAVRAE (64 aa).

It belongs to the short-chain dehydrogenases/reductases (SDR) family. POR subfamily.

Its subcellular location is the plastid. The protein localises to the chloroplast. It carries out the reaction chlorophyllide a + NADP(+) = protochlorophyllide a + NADPH + H(+). The protein operates within porphyrin-containing compound metabolism; chlorophyll biosynthesis. Its function is as follows. Phototransformation of protochlorophyllide (Pchlide) to chlorophyllide (Chlide). This Pisum sativum (Garden pea) protein is Protochlorophyllide reductase, chloroplastic (3PCR).